The sequence spans 156 residues: Ribosomal RNA large subunit methyltransferase H (156 aa).

S-adenosyl-L-methionine-binding positions include Leu-72, Gly-104, and Phe-123–Trp-128.

Belongs to the RNA methyltransferase RlmH family. Homodimer.

It localises to the cytoplasm. It carries out the reaction pseudouridine(1915) in 23S rRNA + S-adenosyl-L-methionine = N(3)-methylpseudouridine(1915) in 23S rRNA + S-adenosyl-L-homocysteine + H(+). Its function is as follows. Specifically methylates the pseudouridine at position 1915 (m3Psi1915) in 23S rRNA. The polypeptide is Ribosomal RNA large subunit methyltransferase H (Ruegeria pomeroyi (strain ATCC 700808 / DSM 15171 / DSS-3) (Silicibacter pomeroyi)).